The primary structure comprises 382 residues: Dodecanoyl-[acyl-carrier-protein] hydrolase, chloroplastic (382 aa).

Residues 1–83 (MATTSLASAF…FSAAEKQWTN (83 aa)) constitute a chloroplast transit peptide. Active-site residues include asparagine 283, histidine 285, and cysteine 320.

The protein belongs to the acyl-ACP thioesterase family.

It localises to the plastid. It is found in the chloroplast. It carries out the reaction dodecanoyl-[ACP] + H2O = dodecanoate + holo-[ACP] + H(+). Its function is as follows. Plays an essential role in chain termination during de novo fatty acid synthesis. High thioesterase activity for myristoyl-ACP. The protein is Dodecanoyl-[acyl-carrier-protein] hydrolase, chloroplastic of Cinnamomum camphora (Camphor tree).